The following is a 338-amino-acid chain: 1-aminocyclopropane-1-carboxylate deaminase (338 aa).

Lys-51 bears the N6-(pyridoxal phosphate)lysine mark. Residue Ser-78 is the Nucleophile of the active site.

The protein belongs to the ACC deaminase/D-cysteine desulfhydrase family. Homotrimer. Requires pyridoxal 5'-phosphate as cofactor.

It catalyses the reaction 1-aminocyclopropane-1-carboxylate + H2O = 2-oxobutanoate + NH4(+). In terms of biological role, catalyzes a cyclopropane ring-opening reaction, the irreversible conversion of 1-aminocyclopropane-1-carboxylate (ACC) to ammonia and alpha-ketobutyrate. Allows growth on ACC as a nitrogen source. In Variovorax paradoxus (strain S110), this protein is 1-aminocyclopropane-1-carboxylate deaminase.